A 315-amino-acid polypeptide reads, in one-letter code: Aspartate carbamoyltransferase catalytic subunit (315 aa).

Carbamoyl phosphate contacts are provided by arginine 65 and threonine 66. Lysine 93 lines the L-aspartate pocket. 3 residues coordinate carbamoyl phosphate: arginine 115, histidine 143, and glutamine 146. Arginine 176 and arginine 231 together coordinate L-aspartate. Positions 272 and 273 each coordinate carbamoyl phosphate.

This sequence belongs to the aspartate/ornithine carbamoyltransferase superfamily. ATCase family. Heterododecamer (2C3:3R2) of six catalytic PyrB chains organized as two trimers (C3), and six regulatory PyrI chains organized as three dimers (R2).

The catalysed reaction is carbamoyl phosphate + L-aspartate = N-carbamoyl-L-aspartate + phosphate + H(+). Its pathway is pyrimidine metabolism; UMP biosynthesis via de novo pathway; (S)-dihydroorotate from bicarbonate: step 2/3. Its function is as follows. Catalyzes the condensation of carbamoyl phosphate and aspartate to form carbamoyl aspartate and inorganic phosphate, the committed step in the de novo pyrimidine nucleotide biosynthesis pathway. The sequence is that of Aspartate carbamoyltransferase catalytic subunit from Hyphomonas neptunium (strain ATCC 15444).